The primary structure comprises 440 residues: Platelet-activating factor acetylhydrolase (440 aa).

A signal peptide spans 1 to 21; the sequence is MVPLKLQALFCLLCCLPWVHP. N-linked (GlcNAc...) asparagine glycans are attached at residues asparagine 59, asparagine 75, and asparagine 199. Serine 272 serves as the catalytic Nucleophile. Active-site charge relay system residues include aspartate 295 and histidine 350.

It belongs to the AB hydrolase superfamily. Lipase family. In terms of processing, N-glycosylated. As to expression, plasma.

It localises to the secreted. Its subcellular location is the extracellular space. It carries out the reaction a 1-O-alkyl-2-acetyl-sn-glycero-3-phosphocholine + H2O = a 1-O-alkyl-sn-glycero-3-phosphocholine + acetate + H(+). It catalyses the reaction 1-O-decyl-2-acetyl-sn-glycero-3-phosphocholine + H2O = 1-O-decyl-sn-glycero-3-phosphocholine + acetate + H(+). The enzyme catalyses 1-O-dodecyl-2-acetyl-sn-glycero-3-phosphocholine + H2O = 1-O-dodecyl-sn-glycero-3-phosphocholine + acetate + H(+). The catalysed reaction is 1-O-tetradecyl-2-acetyl-sn-glycero-3-phosphocholine + H2O = 1-O-tetradecyl-sn-glycero-3-phosphocholine + acetate + H(+). It carries out the reaction 1-O-hexadecyl-2-acetyl-sn-glycero-3-phosphocholine + H2O = 1-O-hexadecyl-sn-glycero-3-phosphocholine + acetate + H(+). It catalyses the reaction 1-O-octadecyl-2-acetyl-sn-glycero-3-phosphocholine + H2O = 1-O-octadecyl-sn-glycero-3-phosphocholine + acetate + H(+). The enzyme catalyses 1-hexadecanoyl-2-acetyl-sn-glycero-3-phosphocholine + H2O = 1-hexadecanoyl-sn-glycero-3-phosphocholine + acetate + H(+). The catalysed reaction is 1-hexadecanoyl-2-propionyl-sn-glycero-3-phosphocholine + H2O = propanoate + 1-hexadecanoyl-sn-glycero-3-phosphocholine + H(+). It carries out the reaction 1-hexadecanoyl-2-butanoyl-sn-glycero-3-phosphocholine + H2O = butanoate + 1-hexadecanoyl-sn-glycero-3-phosphocholine + H(+). It catalyses the reaction 1-hexadecanoyl-2-pentanoyl-sn-glycero-3-phosphocholine + H2O = pentanoate + 1-hexadecanoyl-sn-glycero-3-phosphocholine + H(+). The enzyme catalyses 1-hexadecanoyl-2-glutaroyl-sn-glycero-3-phosphocholine + H2O = glutarate + 1-hexadecanoyl-sn-glycero-3-phosphocholine + H(+). The catalysed reaction is 1-hexadecanoyl-2-(5-oxopentanoyl)-sn-glycero-3-phosphocholine + H2O = 5-oxopentanoate + 1-hexadecanoyl-sn-glycero-3-phosphocholine + H(+). It carries out the reaction 1-hexadecanoyl-2-(9-oxononanoyl)-sn-glycero-3-phosphocholine + H2O = 9-oxononanoate + 1-hexadecanoyl-sn-glycero-3-phosphocholine + H(+). It catalyses the reaction 1-hexadecanoyl-2-[9-hydroperoxy-(10E-octadecenoyl)]-sn-glycero-3-phosphocholine + H2O = 9-hydroperoxy-10E-octadecenoate + 1-hexadecanoyl-sn-glycero-3-phosphocholine + H(+). The enzyme catalyses 1-hexadecanoyl-2-(10-hydroperoxy-8E-octadecenoyl)-sn-glycero-3-phosphocholine + H2O = 10-hydroperoxy-(8E)-octadecenoate + 1-hexadecanoyl-sn-glycero-3-phosphocholine + H(+). Its function is as follows. Lipoprotein-associated calcium-independent phospholipase A2 involved in phospholipid catabolism during inflammatory and oxidative stress response. At the lipid-aqueous interface, hydrolyzes the ester bond of fatty acyl group attached at sn-2 position of phospholipids (phospholipase A2 activity). Specifically targets phospholipids with a short-chain fatty acyl group at sn-2 position. Can hydrolyze phospholipids with long fatty acyl chains, only if they carry oxidized functional groups. Hydrolyzes and inactivates platelet-activating factor (PAF, 1-O-alkyl-2-acetyl-sn-glycero-3-phosphocholine), a potent pro-inflammatory signaling lipid that acts through PTAFR on various innate immune cells. Hydrolyzes oxidatively truncated phospholipids carrying an aldehyde group at omega position, preventing their accumulation in lipoprotein particles and uncontrolled pro-inflammatory effects. As part of high-density lipoprotein (HDL) particles, can hydrolyze phospholipids having long-chain fatty acyl hydroperoxides at sn-2 position and protect against potential accumulation of these oxylipins in the vascular wall. Catalyzes the release from membrane phospholipids of F2-isoprostanes, lipid biomarkers of cellular oxidative damage. This is Platelet-activating factor acetylhydrolase (Pla2g7) from Mus musculus (Mouse).